The primary structure comprises 259 residues: Dickkopf-related protein 2 (259 aa).

A signal peptide spans 1 to 33 (MAALMRVKDSSRCLLLLAAVLMVESSQLGSSRA). The disordered stretch occupies residues 42–70 (LGGETPAQSANRSAGMNQGLAFGGSKKGK). The span at 47-57 (PAQSANRSAGM) shows a compositional bias: polar residues. Asn-52 carries an N-linked (GlcNAc...) asparagine glycan. The interval 78-127 (CSSDKECEVGRYCHSPHQGSSACMLCRRKKKRCHRDGMCCPGTRCNNGIC) is DKK-type Cys-1. 5 disulfide bridges follow: Cys-183-Cys-195, Cys-189-Cys-204, Cys-194-Cys-231, Cys-214-Cys-239, and Cys-233-Cys-256. The tract at residues 183 to 256 (CLRSSDCIDG…YSSKARLHVC (74 aa)) is DKK-type Cys-2.

It belongs to the dickkopf family. In terms of assembly, interacts with LRP5 and LRP6. In terms of processing, may be proteolytically processed by a furin-like protease.

The protein localises to the secreted. Functionally, antagonizes canonical Wnt signaling by inhibiting LRP5/6 interaction with Wnt and by forming a ternary complex with the transmembrane protein KREMEN that promotes internalization of LRP5/6. DKKs play an important role in vertebrate development, where they locally inhibit Wnt regulated processes such as antero-posterior axial patterning, limb development, somitogenesis and eye formation. In the adult, Dkks are implicated in bone formation and bone disease, cancer and Alzheimer disease. This is Dickkopf-related protein 2 from Mus musculus (Mouse).